The following is a 483-amino-acid chain: Proline--tRNA ligase (483 aa).

It belongs to the class-II aminoacyl-tRNA synthetase family. ProS type 3 subfamily. As to quaternary structure, homodimer.

The protein localises to the cytoplasm. It carries out the reaction tRNA(Pro) + L-proline + ATP = L-prolyl-tRNA(Pro) + AMP + diphosphate. Functionally, catalyzes the attachment of proline to tRNA(Pro) in a two-step reaction: proline is first activated by ATP to form Pro-AMP and then transferred to the acceptor end of tRNA(Pro). This chain is Proline--tRNA ligase, found in Mycoplasma pneumoniae (strain ATCC 29342 / M129 / Subtype 1) (Mycoplasmoides pneumoniae).